A 245-amino-acid polypeptide reads, in one-letter code: Sugar fermentation stimulation protein homolog (245 aa).

This sequence belongs to the SfsA family.

This chain is Sugar fermentation stimulation protein homolog, found in Yersinia pestis bv. Antiqua (strain Nepal516).